The following is a 437-amino-acid chain: Probable E3 ubiquitin-protein ligase TRIML2 (437 aa).

Residues threonine 14–isoleucine 55 form a B box-type zinc finger. Zn(2+) is bound by residues cysteine 19, histidine 22, cysteine 41, and histidine 47. Positions isoleucine 55–glutamate 200 form a coiled coil. One can recognise a B30.2/SPRY domain in the interval aspartate 231–proline 429.

The enzyme catalyses S-ubiquitinyl-[E2 ubiquitin-conjugating enzyme]-L-cysteine + [acceptor protein]-L-lysine = [E2 ubiquitin-conjugating enzyme]-L-cysteine + N(6)-ubiquitinyl-[acceptor protein]-L-lysine.. It functions in the pathway protein modification; protein ubiquitination. This is Probable E3 ubiquitin-protein ligase TRIML2 from Homo sapiens (Human).